Reading from the N-terminus, the 96-residue chain is Small ribosomal subunit protein bS6 (96 aa).

This sequence belongs to the bacterial ribosomal protein bS6 family.

Functionally, binds together with bS18 to 16S ribosomal RNA. The chain is Small ribosomal subunit protein bS6 from Bacillus cereus (strain G9842).